Consider the following 39-residue polypeptide: Photosystem II reaction center protein L (39 aa).

A helical transmembrane segment spans residues 18 to 38 (SLYLGLLSVFVLGILFSSYFF).

Belongs to the PsbL family. As to quaternary structure, PSII is composed of 1 copy each of membrane proteins PsbA, PsbB, PsbC, PsbD, PsbE, PsbF, PsbH, PsbI, PsbJ, PsbK, PsbL, PsbM, PsbT, PsbX, PsbY, Psb30/Ycf12, peripheral proteins PsbO, CyanoQ (PsbQ), PsbU, PsbV and a large number of cofactors. It forms dimeric complexes.

The protein localises to the cellular thylakoid membrane. In terms of biological role, one of the components of the core complex of photosystem II (PSII). PSII is a light-driven water:plastoquinone oxidoreductase that uses light energy to abstract electrons from H(2)O, generating O(2) and a proton gradient subsequently used for ATP formation. It consists of a core antenna complex that captures photons, and an electron transfer chain that converts photonic excitation into a charge separation. This subunit is found at the monomer-monomer interface and is required for correct PSII assembly and/or dimerization. This chain is Photosystem II reaction center protein L, found in Prochlorococcus marinus (strain MIT 9301).